Consider the following 179-residue polypeptide: MQQNIIKVIVGSKNPVKINAAANAMALLFPEYEIQTQGMDAPSGVPAQPMTDSDTRQGAINRVHYCQQQIEADYYFAMEGGVDCFEFGPATFAYIAIAHQARLSIGRGALLPLPMQVYQALEAGEELGHVMDRLFNTVNIKQKGGAIGLLTRGHATRESNYTQAIILAMAPFLNPELYP.

Glutamate 71 serves as a coordination point for Mg(2+). 71-72 (EA) lines the substrate pocket.

The protein belongs to the YjjX NTPase family. As to quaternary structure, homodimer. Mg(2+) is required as a cofactor. Requires Mn(2+) as cofactor.

The enzyme catalyses XTP + H2O = XDP + phosphate + H(+). The catalysed reaction is ITP + H2O = IDP + phosphate + H(+). Its function is as follows. Phosphatase that hydrolyzes non-canonical purine nucleotides such as XTP and ITP to their respective diphosphate derivatives. Probably excludes non-canonical purines from DNA/RNA precursor pool, thus preventing their incorporation into DNA/RNA and avoiding chromosomal lesions. In Shewanella sp. (strain MR-4), this protein is Inosine/xanthosine triphosphatase.